Consider the following 188-residue polypeptide: Protein GrpE (188 aa).

Residues 1–30 (MTKKTSHHKAEQKEKRAGEESGRESEVLDH) are disordered. A compositionally biased stretch (basic and acidic residues) spans 8–30 (HKAEQKEKRAGEESGRESEVLDH).

The protein belongs to the GrpE family. In terms of assembly, homodimer.

It localises to the cytoplasm. In terms of biological role, participates actively in the response to hyperosmotic and heat shock by preventing the aggregation of stress-denatured proteins, in association with DnaK and GrpE. It is the nucleotide exchange factor for DnaK and may function as a thermosensor. Unfolded proteins bind initially to DnaJ; upon interaction with the DnaJ-bound protein, DnaK hydrolyzes its bound ATP, resulting in the formation of a stable complex. GrpE releases ADP from DnaK; ATP binding to DnaK triggers the release of the substrate protein, thus completing the reaction cycle. Several rounds of ATP-dependent interactions between DnaJ, DnaK and GrpE are required for fully efficient folding. This is Protein GrpE from Chlorobium phaeobacteroides (strain BS1).